Reading from the N-terminus, the 143-residue chain is Transcriptional regulator MraZ (143 aa).

SpoVT-AbrB domains lie at Glu-5 to Glu-47 and Ala-76 to Ser-119.

It belongs to the MraZ family. In terms of assembly, forms oligomers.

It localises to the cytoplasm. The protein resides in the nucleoid. The sequence is that of Transcriptional regulator MraZ from Staphylococcus carnosus (strain TM300).